Reading from the N-terminus, the 659-residue chain is Protein FAM161A (659 aa).

Residues 34-59 (LGERQQQRTASVSPQRLPRTSMGTPA) are disordered. The stretch at 96 to 120 (YVQVEKLKKAHLQNMEQLEKMYDKK) forms a coiled coil. Disordered regions lie at residues 165-190 (GSVSPSLSESSHESTNGDSSDSEHSV) and 401-428 (LAPGAHSGTKKGKCYKPKEKQKHKPKIS). Residues 408–426 (GTKKGKCYKPKEKQKHKPK) are compositionally biased toward basic residues. Residues 531-557 (AIRKREKQRTKDYMKELEAMEQRVLNK) are a coiled coil. The segment at 594 to 659 (NGQSASVDEH…TDEDHSMEEI (66 aa)) is disordered. Residues 600–616 (VDEHVSVREENNPRAES) are compositionally biased toward basic and acidic residues. Residues 637–650 (PESEEAQEEDAYST) are compositionally biased toward acidic residues.

The protein belongs to the FAM161 family.

Its subcellular location is the cytoplasm. It is found in the cytoskeleton. The protein resides in the cilium basal body. It localises to the cell projection. The protein localises to the cilium. Its subcellular location is the microtubule organizing center. It is found in the centrosome. The protein resides in the centriole. In terms of biological role, involved in ciliogenesis. The protein is Protein FAM161A (fam161a) of Xenopus tropicalis (Western clawed frog).